The chain runs to 139 residues: Large ribosomal subunit protein uL13c (139 aa).

Belongs to the universal ribosomal protein uL13 family. In terms of assembly, part of the 50S ribosomal subunit.

Its subcellular location is the plastid. The protein localises to the chloroplast. The sequence is that of Large ribosomal subunit protein uL13c from Trieres chinensis (Marine centric diatom).